The sequence spans 513 residues: Type-2 serine--tRNA ligase (513 aa).

Position 312 (A312) interacts with L-serine. C314 is a binding site for Zn(2+). Residue R344 coordinates L-serine. ATP-binding positions include 344 to 346 and 355 to 356; these read RWE and RV. L-serine is bound at residue 361 to 363; the sequence is RVE. Residues E363 and C467 each coordinate Zn(2+). An ATP-binding site is contributed by R474.

This sequence belongs to the class-II aminoacyl-tRNA synthetase family. Type-2 seryl-tRNA synthetase subfamily. Homodimer. It depends on Zn(2+) as a cofactor.

The protein localises to the cytoplasm. The catalysed reaction is tRNA(Ser) + L-serine + ATP = L-seryl-tRNA(Ser) + AMP + diphosphate + H(+). It catalyses the reaction tRNA(Sec) + L-serine + ATP = L-seryl-tRNA(Sec) + AMP + diphosphate + H(+). Its pathway is aminoacyl-tRNA biosynthesis; selenocysteinyl-tRNA(Sec) biosynthesis; L-seryl-tRNA(Sec) from L-serine and tRNA(Sec): step 1/1. Functionally, catalyzes the attachment of serine to tRNA(Ser). Is also able to aminoacylate tRNA(Sec) with serine, to form the misacylated tRNA L-seryl-tRNA(Sec), which will be further converted into selenocysteinyl-tRNA(Sec). The protein is Type-2 serine--tRNA ligase (serS) of Methanothermobacter thermautotrophicus (strain ATCC 29096 / DSM 1053 / JCM 10044 / NBRC 100330 / Delta H) (Methanobacterium thermoautotrophicum).